Consider the following 197-residue polypeptide: Peptide deformylase (197 aa).

Fe cation-binding residues include Cys106 and His148. Residue Glu149 is part of the active site. His152 is a binding site for Fe cation.

This sequence belongs to the polypeptide deformylase family. Requires Fe(2+) as cofactor.

The catalysed reaction is N-terminal N-formyl-L-methionyl-[peptide] + H2O = N-terminal L-methionyl-[peptide] + formate. In terms of biological role, removes the formyl group from the N-terminal Met of newly synthesized proteins. Requires at least a dipeptide for an efficient rate of reaction. N-terminal L-methionine is a prerequisite for activity but the enzyme has broad specificity at other positions. This chain is Peptide deformylase, found in Mycobacteroides abscessus (strain ATCC 19977 / DSM 44196 / CCUG 20993 / CIP 104536 / JCM 13569 / NCTC 13031 / TMC 1543 / L948) (Mycobacterium abscessus).